The primary structure comprises 349 residues: Aminomethyltransferase (349 aa).

It belongs to the GcvT family. The glycine cleavage system is composed of four proteins: P, T, L and H.

The catalysed reaction is N(6)-[(R)-S(8)-aminomethyldihydrolipoyl]-L-lysyl-[protein] + (6S)-5,6,7,8-tetrahydrofolate = N(6)-[(R)-dihydrolipoyl]-L-lysyl-[protein] + (6R)-5,10-methylene-5,6,7,8-tetrahydrofolate + NH4(+). In terms of biological role, the glycine cleavage system catalyzes the degradation of glycine. The sequence is that of Aminomethyltransferase from Thermus thermophilus (strain ATCC BAA-163 / DSM 7039 / HB27).